The chain runs to 290 residues: MAKKPKQLRNKPRKSFSTQTFTVVVLVLFVILILVGLGIFSLPSTNKTSSMPMDLTTIVQTIQERESFGDEEDGNGDRWLEVISWEPRAFVYHNFLTNEECEHLISLAKPSMMKSKVVDVKTGKSIDSRVRTSSGTFLNRGHDEIVEEIENRISDFTFIPPENGEGLQVLHYEVGQRYEPHHDYFFDEFNVRKGGQRIATVLMYLSDVDEGGETVFPAAKGNVSDVPWWDELSQCGKEGLSVLPKKRDALLFWSMKPDASLDPSSLHGGCPVIKGNKWSSTKWFHVHEYN.

Residues 1–19 (MAKKPKQLRNKPRKSFSTQ) are Cytoplasmic-facing. A helical; Signal-anchor for type II membrane protein membrane pass occupies residues 20 to 40 (TFTVVVLVLFVILILVGLGIF). Over 41–290 (SLPSTNKTSS…TKWFHVHEYN (250 aa)) the chain is Lumenal. Asn46 is a glycosylation site (N-linked (GlcNAc...) asparagine). Residues 163-286 (NGEGLQVLHY…KWSSTKWFHV (124 aa)) form the Fe2OG dioxygenase domain. Fe cation-binding residues include His181 and Asp183. Asn222 carries an N-linked (GlcNAc...) asparagine glycan. Position 267 (His267) interacts with Fe cation. Residue Lys277 coordinates 2-oxoglutarate.

This sequence belongs to the P4HA family. Fe(2+) is required as a cofactor. L-ascorbate serves as cofactor.

The protein localises to the endoplasmic reticulum membrane. It carries out the reaction L-prolyl-[collagen] + 2-oxoglutarate + O2 = trans-4-hydroxy-L-prolyl-[collagen] + succinate + CO2. In terms of biological role, catalyzes the post-translational formation of 4-hydroxyproline in -Xaa-Pro-Gly- sequences in proline-rich peptide sequences of plant glycoproteins and other proteins. Hydroxyprolines are important constituent of many plant cell wall glycoproteins such as extensins, hydroxyproline-rich glycoproteins, lectins and arabinogalactan proteins. This chain is Probable prolyl 4-hydroxylase 8, found in Arabidopsis thaliana (Mouse-ear cress).